Reading from the N-terminus, the 20-residue chain is Superoxide dismutase [Fe] (20 aa).

It belongs to the iron/manganese superoxide dismutase family. As to quaternary structure, homodimer. Requires Fe cation as cofactor.

Its subcellular location is the periplasm. The enzyme catalyses 2 superoxide + 2 H(+) = H2O2 + O2. Destroys superoxide anion radicals which are normally produced within the cells and which are toxic to biological systems. The protein is Superoxide dismutase [Fe] (sodB) of Photobacterium damsela subsp. piscicida (Pasteurella piscicida).